We begin with the raw amino-acid sequence, 253 residues long: MLLLLSPAKSLDYTSPLPPLEATAPRFAEEALATAQAAAKLSARKLAGLMGISDKLAKLNAGRYADFAGQEERPALYAFSGDVYVGFEAKTLDEPAIGFAQDHVRILSGLYGLLRPLDLIRPYRLEMGTRWAPGRKKNLYQLWGSKISDALAADLLGEGSDVIVNCASKEYWHAVDQAPPKGIRIITMDFRELAPQGLIFNSFGAKRARGMMARWMCEHRITDPEGLKGFDSDGYAYSAEGSDDSTWRFVKTR.

Belongs to the UPF0246 family.

The sequence is that of UPF0246 protein Swit_4565 from Rhizorhabdus wittichii (strain DSM 6014 / CCUG 31198 / JCM 15750 / NBRC 105917 / EY 4224 / RW1) (Sphingomonas wittichii).